A 299-amino-acid chain; its full sequence is 4-diphosphocytidyl-2-C-methyl-D-erythritol kinase (299 aa).

K11 is a catalytic residue. 94-104 contacts ATP; it reads PQGGGLGGGSS. The active site involves D136.

This sequence belongs to the GHMP kinase family. IspE subfamily.

It catalyses the reaction 4-CDP-2-C-methyl-D-erythritol + ATP = 4-CDP-2-C-methyl-D-erythritol 2-phosphate + ADP + H(+). Its pathway is isoprenoid biosynthesis; isopentenyl diphosphate biosynthesis via DXP pathway; isopentenyl diphosphate from 1-deoxy-D-xylulose 5-phosphate: step 3/6. Catalyzes the phosphorylation of the position 2 hydroxy group of 4-diphosphocytidyl-2C-methyl-D-erythritol. This chain is 4-diphosphocytidyl-2-C-methyl-D-erythritol kinase, found in Bordetella bronchiseptica (strain ATCC BAA-588 / NCTC 13252 / RB50) (Alcaligenes bronchisepticus).